Here is a 511-residue protein sequence, read N- to C-terminus: MKCLLYLAFLFIGVNCKFTIVFPHNQKGNWKNVPSNYHYCPSSSDLNWHNDLVGTALQVKMPKSHKAIQADGWMCHASKWVTTCDFRWYGPKYITHSIRSFTPSVEQCKESIEQTKQGTWLNPGFPPQSCGYATVTDAEAAIVQVTPHHVLVDEYTGEWVDSQFINGKCSNDICPTVHNSTTWHSDYKVKGLCDSNLISMDITFFSEDGELSSLGKKGTGFRSNYFAYETGDKACKMQYCKHWGVRLPSGVWFEMADKDLFAAARFPECPEGSSISAPSQTSVDVSLIQDVERILDYSLCQETWSKIRAGLPISPVDLSYLAPKNPGTGPVFTIINGTLKYFETRYIRVDIAAPILSRMVGMISGTTTERVLWDDWAPYEDVGIGPNGVLRTSSGYKFPLYMIGHGMLDSDLHLSSKAQVFEHPHIQDAASQLPDGETLFFGDTGLSKNPIEFVEGWFSSWKSSIASFFFTIGLIIGLFLVLRVGIYLCIKLKHTKKRQIYTDIEMNRLGT.

A signal peptide spans 1-16 (MKCLLYLAFLFIGVNC). Over 17-467 (KFTIVFPHNQ…FSSWKSSIAS (451 aa)) the chain is Virion surface. The tract at residues 18–35 (FTIVFPHNQKGNWKNVPS) is trimerization. Disulfide bonds link Cys-40–Cys-300, Cys-75–Cys-108, Cys-84–Cys-130, Cys-169–Cys-174, Cys-193–Cys-240, and Cys-235–Cys-269. A fusion peptide region spans residues 53 to 172 (VGTALQVKMP…QFINGKCSND (120 aa)). At Lys-66 the chain carries N6-methyllysine; by host. N-linked (GlcNAc...) asparagine; by host glycosylation is present at Asn-179. The trimerization stretch occupies residues 259–309 (DLFAAARFPECPEGSSISAPSQTSVDVSLIQDVERILDYSLCQETWSKIRA). Asn-336 carries an N-linked (GlcNAc...) asparagine; by host glycan. The interval 383-405 (GIGPNGVLRTSSGYKFPLYMIGH) is trimerization. Residues 468–488 (FFFTIGLIIGLFLVLRVGIYL) traverse the membrane as a helical segment. A lipid anchor (S-palmitoyl cysteine; by host) is attached at Cys-489. Residues 489 to 511 (CIKLKHTKKRQIYTDIEMNRLGT) are Intravirion-facing.

The protein belongs to the vesiculovirus glycoprotein family. Homotrimer. Interacts with host LDL at target cell surface (via CR2 and CR3 domains). Post-translationally, glycosylated by host. Palmitoylated by host.

It is found in the virion membrane. The protein resides in the host membrane. In terms of biological role, attaches the virus to host LDL receptors, inducing clathrin-dependent endocytosis of the virion. In the endosome, the acidic pH induces conformational changes in the glycoprotein trimer, which trigger fusion between virus and endosomal membrane. The sequence is that of Glycoprotein G (G) from Vesicular stomatitis Indiana virus (strain Mudd-Summers) (VSIV).